We begin with the raw amino-acid sequence, 95 residues long: Alpha-conotoxin GeXXA (95 aa).

The first 21 residues, 1-21 (MPKQEKMMLVLLILPLPYCNA), serve as a signal peptide directing secretion. A propeptide spanning residues 22–45 (AGVTTVQWGGHGDGLDRYLQRGVR) is cleaved from the precursor. Intrachain disulfides connect Cys64/Cys73, Cys69/Cys81, Cys74/Cys91, and Cys79/Cys93.

The protein belongs to the conotoxin D superfamily. Homodimer. Pseudo-homodimer (identical sequence, different post-translational modifications). As to expression, expressed by the venom duct.

It is found in the secreted. In terms of biological role, alpha-D-conopeptides act as non-competitive inhibitors of nicotinic acetylcholine receptors (nAChR). Through its two C-terminal domains, this homodimeric protein would bind to two nAChR allosteric sites, located outside the nAChR C-loop of the principal binding face and at the adjacent binding interface in a clockwise direction. This toxin has strong inhibitory activity on rat alpha-9-alpha-10 (CHRNA9-CHRNA10) (IC(50)=1.2 nM) and a moderate inhibitory activity on human alpha-7 (CHRNA7) (IC(50)=210 nM), rat alpha-3-beta-2 (CHRNA3-CHRNB2) (IC(50)=498 nM), rat alpha-3-beta-4 (CHRNA3-CHRNB4) (IC(50)=614 nM) and rat alpha-1-beta-1-delta-epsilon (CHRNA1-CHRNB1-CHRNE-CHRND) (IC(50)=743 nM) subtypes. Shows a weaker inhibitory activity on human alpha-9-alpha-10 (IC(50)=28 nM) than on the rat channel. This is explained by a different residue in the probable binding site (His-31 in rat alpha-10 and Leu-31 in human). This is Alpha-conotoxin GeXXA from Conus generalis (General cone).